The sequence spans 45 residues: Iota-conotoxin-like R11.10 (45 aa).

4 disulfide bridges follow: cysteine 5/cysteine 19, cysteine 12/cysteine 22, cysteine 18/cysteine 27, and cysteine 21/cysteine 36. Position 43 is a D-leucine (leucine 43). Residue arginine 45 is a propeptide, removed by a carboxypeptidase.

It belongs to the conotoxin I1 superfamily. As to expression, expressed by the venom duct.

It is found in the secreted. Its function is as follows. Iota-conotoxins bind to voltage-gated sodium channels (Nav) and act as agonists by shifting the voltage-dependence of activation to more hyperpolarized levels. Produces general excitatory symptoms. The sequence is that of Iota-conotoxin-like R11.10 from Conus radiatus (Rayed cone).